A 214-amino-acid polypeptide reads, in one-letter code: Nicotinamidase (214 aa).

D18 functions as the Proton acceptor in the catalytic mechanism. A divalent metal cation-binding residues include D56, H58, H62, and H91. K116 is a catalytic residue. Catalysis depends on C161, which acts as the Nucleophile.

It belongs to the isochorismatase family. Requires a divalent metal cation as cofactor.

It catalyses the reaction nicotinamide + H2O = nicotinate + NH4(+). It functions in the pathway cofactor biosynthesis; nicotinate biosynthesis; nicotinate from nicotinamide: step 1/1. Functionally, catalyzes the deamidation of nicotinamide (NAM) into nicotinate (Na). Functions in the deamidating salvage pathway for production of NAD from nicotinamide. This is Nicotinamidase from Acinetobacter baylyi (strain ATCC 33305 / BD413 / ADP1).